Consider the following 708-residue polypeptide: Lactotransferrin (708 aa).

The first 19 residues, 1–19, serve as a signal peptide directing secretion; sequence MKLFFPALLSLGALGLCLA. Transferrin-like domains are found at residues 25-352 and 364-693; these read VRWC…GLRE and VVWC…KLRR. Disulfide bonds link Cys28–Cys64 and Cys38–Cys55. The interval 44–51 is interaction with E.coli ompC; the sequence is RMKKVRGP. Residue Asp79 coordinates Fe(3+). The active site involves Lys92. Tyr111 lines the Fe(3+) pocket. 5 disulfide bridges follow: Cys134/Cys217, Cys176/Cys192, Cys179/Cys202, Cys189/Cys200, and Cys250/Cys264. Residues Thr136, Arg140, Ala142, and Gly143 each contribute to the hydrogencarbonate site. Tyr211 lines the Fe(3+) pocket. Asn252 carries an N-linked (GlcNAc...) asparagine glycan. His272 provides a ligand contact to Fe(3+). The active-site Nucleophile is the Ser278. Disulfide bonds link Cys367/Cys399 and Cys377/Cys390. The N-linked (GlcNAc...) asparagine glycan is linked to Asn385. Fe(3+)-binding residues include Asp414 and Tyr452. Disulfide bonds link Cys424–Cys703, Cys444–Cys666, Cys476–Cys551, Cys500–Cys694, Cys510–Cys524, Cys521–Cys534, Cys592–Cys606, and Cys644–Cys649. Hydrogencarbonate is bound by residues Thr478, Arg482, Ala484, and Gly485. A glycan (N-linked (GlcNAc...) asparagine) is linked at Asn537. Tyr545 serves as a coordination point for Fe(3+). Residue Asn594 is glycosylated (N-linked (GlcNAc...) asparagine). Residue His614 coordinates Fe(3+).

Belongs to the transferrin family. Monomer. Found in a complex with LTF, CLU, EPPIN and SEMG1. Interacts with E.coli outer membrane protein C (OmpC). Found in a complex with MPO and LTF; interacts directly with CP, allows Fe(3+) incorporation into LTF and activation of CP ferroxidase activity. Post-translationally, poly-N-acetyllactosaminic carbohydrate moiety seems to be needed for TLR4 activation.

The protein resides in the secreted. The protein localises to the cytoplasmic granule. In terms of biological role, transferrins are iron binding transport proteins which can bind two Fe(3+) ions in association with the binding of an anion, usually bicarbonate. Major iron-binding and multifunctional protein found in exocrine fluids such as breast milk and mucosal secretions. Has antimicrobial activity, which depends on the extracellular cation concentration. Antimicrobial properties include bacteriostasis, which is related to its ability to sequester free iron and thus inhibit microbial growth, as well as direct bactericidal properties leading to the release of lipopolysaccharides from the bacterial outer membrane. Can also prevent bacterial biofilm development in P.aeruginosa infection. Has weak antifungal activity against C.albicans. Has anabolic, differentiating and anti-apoptotic effects on osteoblasts and can also inhibit osteoclastogenesis, possibly playing a role in the regulation of bone growth. Promotes binding of species C adenoviruses to epithelial cells, promoting adenovirus infection. Can inhibit papillomavirus infections. Stimulates the TLR4 signaling pathway leading to NF-kappa-B activation and subsequent pro-inflammatory cytokine production while also interfering with the lipopolysaccharide (LPS)-stimulated TLR4 signaling. Inhibits neutrophil granulocyte migration to sites of apoptosis, when secreted by apoptotic cells. Stimulates VEGFA-mediated endothelial cell migration and proliferation. Binds heparin, chondroitin sulfate and possibly other glycosaminoglycans (GAGs). Also binds specifically to pneumococcal surface protein A (PspA), the lipid A portion of bacterial lipopolysaccharide (LPS), lysozyme and DNA. Its function is as follows. Lactoferricin binds to the bacterial surface and is crucial for the bactericidal functions. Has some antiviral activity against papillomavirus infection. N-terminal region shows strong antifungal activity against C.albicans. Contains two BBXB heparin-binding consensus sequences that appear to form the predominate functional GAG-binding site. Functionally, the lactotransferrin transferrin-like domain 1 functions as a serine protease of the peptidase S60 family that cuts arginine rich regions. This function contributes to the antimicrobial activity. Shows a preferential cleavage at -Arg-Ser-Arg-Arg-|- and -Arg-Arg-Ser-Arg-|-, and of Z-Phe-Arg-|-aminomethylcoumarin sites. This chain is Lactotransferrin (LTF), found in Camelus dromedarius (Dromedary).